We begin with the raw amino-acid sequence, 238 residues long: Phosphatidylcholine synthase (238 aa).

Residues 1–16 (MPVNLSMTPINKAKAW) lie on the Cytoplasmic side of the membrane. A helical membrane pass occupies residues 17–37 (GVHAVTASGVILALLALLALV). Over 38 to 41 (DNKP) the chain is Periplasmic. The chain crosses the membrane as a helical span at residues 42-62 (QACLLWLGLALLVDGLDGTLA). The Cytoplasmic segment spans residues 63–75 (RKYEVKEMLPHFD). A helical membrane pass occupies residues 76–96 (GSVLDLVIDYLTYVFIPAIFI). Residues 97–104 (YRYIPLPE) are Periplasmic-facing. Residues 105–125 (HFELLAVGVILVSSLFCFCNV) traverse the membrane as a helical segment. Residues 126–132 (NMKSTDN) lie on the Cytoplasmic side of the membrane. A helical membrane pass occupies residues 133–153 (YFVGFPAAWNVVAVYFYVLDL). At 154-155 (HP) the chain is on the periplasmic side. Residues 156–176 (WVNLATVLVLAALTLTRMKFL) form a helical membrane-spanning segment. The Cytoplasmic portion of the chain corresponds to 177–183 (HPFRVRQ). The helical transmembrane segment at 184–204 (FMPLNIAVTFVWLISSGLLIV) threads the bilayer. The Periplasmic segment spans residues 205-209 (QQPAD). Residues 210-230 (LPILLGLWFAASAYFVGICLW) traverse the membrane as a helical segment. The Cytoplasmic portion of the chain corresponds to 231–238 (RSAREWFG).

The protein belongs to the CDP-alcohol phosphatidyltransferase class-I family. Requires Mn(2+) as cofactor.

It localises to the cell inner membrane. The enzyme catalyses a CDP-1,2-diacyl-sn-glycerol + choline = a 1,2-diacyl-sn-glycero-3-phosphocholine + CMP + H(+). In terms of biological role, condenses choline with CDP-diglyceride to produce phosphatidylcholine and CMP. The protein is Phosphatidylcholine synthase of Pseudomonas aeruginosa (strain ATCC 15692 / DSM 22644 / CIP 104116 / JCM 14847 / LMG 12228 / 1C / PRS 101 / PAO1).